We begin with the raw amino-acid sequence, 535 residues long: T-box transcription factor TBX21 (535 aa).

Positions 1 to 62 are disordered; that stretch reads MGIVEPGCGD…SLGSPYPGGA (62 aa). At Ser-53 the chain carries Phosphoserine. Phosphotyrosine is present on Tyr-77. The interval 83-109 is disordered; that stretch reads AAGFPGAGESFPPPADAEGYQPGEGYA. Tyr-118 is modified (phosphotyrosine). Residues 141-326 constitute a DNA-binding region (T-box); the sequence is LNNHLLWSKF…NNPFAKGFRE (186 aa). The residue at position 220 (Tyr-220) is a Phosphotyrosine; by ABL1. Ser-225 is subject to Phosphoserine. Residue Tyr-266 is modified to Phosphotyrosine; by ABL1. Thr-303 bears the Phosphothreonine mark. Tyr-305 is subject to Phosphotyrosine; by ABL1. Lys-314 is covalently cross-linked (Glycyl lysine isopeptide (Lys-Gly) (interchain with G-Cter in ubiquitin)). The tract at residues 449–535 is disordered; the sequence is RPMRTLPMEP…EGQFYNYFPN (87 aa). Residues 503-520 are compositionally biased toward low complexity; that stretch reads SPYPSSGDSSSPAGAPSP. Position 513 is a phosphoserine (Ser-513). At Tyr-530 the chain carries Phosphotyrosine; by ITK.

As to quaternary structure, interacts with RUNX1, RUNX3, ITK, ABL1, RELA, CDK9 and KDM6B. The phosphorylated form (at Thr-303) interacts with NFATC2. Interacts with SMARCA4 in a KDM6B-dependent manner. Interacts with CCTN1. Interacts with USP10. The phosphorylated form (at Tyr-530) interacts with GATA3. In terms of processing, phosphorylations at Ser-53, Tyr-77, Ser-225 and Ser-513 are regulated by mTORC1. Phosphorylation at Tyr-530 is essential for its interaction GATA3. Phosphorylation at Tyr-220, Tyr-266 and Tyr-305 enhances its transcriptional activator activity. Phosphorylation at Thr-303 is required for its interaction with NFATC2. Post-translationally, ubiquitinated at Lys-314, leading to its degradation by the proteasome. Ubiquitination is essential for controlling protein stability, binding to the T-box-binding element of the IFN-gamma promoter, and for interaction with NFATC2 through induction of phosphorylation at Thr-303. Deubiquitinated by USP10 leading to its stabilization. In terms of tissue distribution, T-cell specific.

The protein resides in the nucleus. In terms of biological role, lineage-defining transcription factor which initiates Th1 lineage development from naive Th precursor cells both by activating Th1 genetic programs and by repressing the opposing Th2 and Th17 genetic programs. Activates transcription of a set of genes important for Th1 cell function, including those encoding IFN-gamma and the chemokine receptor CXCR3. Induces permissive chromatin accessibilty and CpG methylation in IFNG. Activates IFNG and CXCR3 genes in part by recruiting chromatin remodeling complexes including KDM6B, a SMARCA4-containing SWI/SNF-complex, and an H3K4me2-methyltransferase complex to their promoters and all of these complexes serve to establish a more permissive chromatin state conducive with transcriptional activation. Can activate Th1 genes also via recruitment of Mediator complex and P-TEFb (composed of CDK9 and CCNT1/cyclin-T1) in the form of the super elongation complex (SEC) to super-enhancers and associated genes in activated Th1 cells. Inhibits the Th17 cell lineage commitment by blocking RUNX1-mediated transactivation of Th17 cell-specific transcriptinal regulator RORC. Inhibits the Th2 cell lineage commitment by suppressing the production of Th2 cytokines, such as IL-4, IL-5, and IL- 13, via repression of transcriptional regulators GATA3 and NFATC2. Protects Th1 cells from amplifying aberrant type-I IFN response in an IFN-gamma abundant microenvironment by acting as a repressor of type-I IFN transcription factors and type-I IFN-stimulated genes. Acts as a regulator of antiviral B-cell responses; controls chronic viral infection by promoting the antiviral antibody IgG2a isotype switching and via regulation of a broad antiviral gene expression program. Required for the correct development of natural killer (NK) and mucosal-associated invariant T (MAIT) cells. This chain is T-box transcription factor TBX21 (TBX21), found in Homo sapiens (Human).